Here is an 89-residue protein sequence, read N- to C-terminus: Small ribosomal subunit protein uS15 (89 aa).

It belongs to the universal ribosomal protein uS15 family. In terms of assembly, part of the 30S ribosomal subunit. Forms a bridge to the 50S subunit in the 70S ribosome, contacting the 23S rRNA.

Its function is as follows. One of the primary rRNA binding proteins, it binds directly to 16S rRNA where it helps nucleate assembly of the platform of the 30S subunit by binding and bridging several RNA helices of the 16S rRNA. Functionally, forms an intersubunit bridge (bridge B4) with the 23S rRNA of the 50S subunit in the ribosome. The sequence is that of Small ribosomal subunit protein uS15 from Actinobacillus pleuropneumoniae serotype 5b (strain L20).